The sequence spans 137 residues: Large ribosomal subunit protein uL16 (137 aa).

The tract at residues 1–20 (MLQPKRTKFRKQQKMRNRGL) is disordered.

It belongs to the universal ribosomal protein uL16 family. As to quaternary structure, part of the 50S ribosomal subunit.

Its function is as follows. Binds 23S rRNA and is also seen to make contacts with the A and possibly P site tRNAs. In Francisella philomiragia subsp. philomiragia (strain ATCC 25017 / CCUG 19701 / FSC 153 / O#319-036), this protein is Large ribosomal subunit protein uL16.